Consider the following 370-residue polypeptide: Actin-related protein 2/3 complex subunit 1A (370 aa).

WD repeat units lie at residues 6-45 (FLLEPITCHAWNRDRTQIALSPNNHEVHIYKKNGSQWTKA), 50-89 (EHNGHITGIDWAPKSDRIVTCGADRNAYVWSQKDGIWKPT), 140-179 (PIRSTVLSLDWHPNNVLLAAGSCDFKCRVFSAYIKEVDEK), 202-241 (GTGGWVHGVSFSASGNRLAWVSHDSTVSVADASKSVQVST), 244-284 (TEFL…TFVS), and 322-365 (LHQN…SSIQ).

Belongs to the WD repeat ARPC1 family. As to quaternary structure, probable component of the Arp2/3 complex in which it may replace ARPC1B.

Its subcellular location is the cytoplasm. The protein resides in the cytoskeleton. The protein localises to the nucleus. Functionally, probably functions as a component of the Arp2/3 complex which is involved in regulation of actin polymerization and together with an activating nucleation-promoting factor (NPF) mediates the formation of branched actin networks. In addition to its role in the cytoplasmic cytoskeleton, the Arp2/3 complex also promotes actin polymerization in the nucleus, thereby regulating gene transcription and repair of damaged DNA. The protein is Actin-related protein 2/3 complex subunit 1A (Arpc1a) of Mus musculus (Mouse).